The chain runs to 632 residues: Golgin subfamily A member 8J (632 aa).

The disordered stretch occupies residues 1–76 (MAEETQHNKL…TSSATLKDLE (76 aa)). Coiled coils occupy residues 86–154 (LDSR…HMKR) and 220–421 (LKVQ…SLMA). Basic and acidic residues-rich tracts occupy residues 352-362 (KQEERIQEQHK) and 427-440 (HGGE…EEAP). 3 disordered regions span residues 352 to 377 (KQEE…FKEP), 423 to 452 (PGEG…DPES), and 496 to 524 (LSEP…DEGE). Residues 508-520 (LGGGHHQAGAQGG) show a composition bias toward gly residues.

This sequence belongs to the GOLGA8 family.

In Homo sapiens (Human), this protein is Golgin subfamily A member 8J (GOLGA8J).